The primary structure comprises 708 residues: Tryptophan synthase (708 aa).

Positions 1–305 are tryptophan synthase alpha chain; that stretch reads MEGIKQTFQR…EADIDAQLAA (305 aa). Residues Glu-49 and Asp-60 each act as proton acceptor in the active site. A tryptophan synthase beta chain region spans residues 306 to 708; sequence LHGTIPKRFG…GPKIGWDLRF (403 aa). The residue at position 392 (Lys-392) is an N6-(pyridoxal phosphate)lysine.

In the N-terminal section; belongs to the TrpA family. It in the C-terminal section; belongs to the TrpB family. It depends on pyridoxal 5'-phosphate as a cofactor.

The catalysed reaction is (1S,2R)-1-C-(indol-3-yl)glycerol 3-phosphate + L-serine = D-glyceraldehyde 3-phosphate + L-tryptophan + H2O. The protein operates within amino-acid biosynthesis; L-tryptophan biosynthesis; L-tryptophan from chorismate: step 5/5. The chain is Tryptophan synthase (trp-3) from Neurospora crassa (strain ATCC 24698 / 74-OR23-1A / CBS 708.71 / DSM 1257 / FGSC 987).